The primary structure comprises 377 residues: Succinyl-diaminopimelate desuccinylase (377 aa).

His-67 provides a ligand contact to Zn(2+). The active site involves Asp-69. Asp-100 serves as a coordination point for Zn(2+). The active-site Proton acceptor is Glu-134. Residues Glu-135, Glu-163, and His-349 each coordinate Zn(2+).

Belongs to the peptidase M20A family. DapE subfamily. As to quaternary structure, homodimer. Zn(2+) is required as a cofactor. The cofactor is Co(2+).

It catalyses the reaction N-succinyl-(2S,6S)-2,6-diaminopimelate + H2O = (2S,6S)-2,6-diaminopimelate + succinate. It participates in amino-acid biosynthesis; L-lysine biosynthesis via DAP pathway; LL-2,6-diaminopimelate from (S)-tetrahydrodipicolinate (succinylase route): step 3/3. In terms of biological role, catalyzes the hydrolysis of N-succinyl-L,L-diaminopimelic acid (SDAP), forming succinate and LL-2,6-diaminopimelate (DAP), an intermediate involved in the bacterial biosynthesis of lysine and meso-diaminopimelic acid, an essential component of bacterial cell walls. The protein is Succinyl-diaminopimelate desuccinylase of Haemophilus influenzae (strain PittEE).